Here is a 379-residue protein sequence, read N- to C-terminus: UPF0450 protein C17orf58 homolog (379 aa).

The N-terminal stretch at 1–17 is a signal peptide; the sequence is MIPALTVPLLFLCATSA. Disordered stretches follow at residues 76-95 and 162-194; these read RTRA…PDKT and TASQ…MNPH. Residues 180–194 show a composition bias toward basic and acidic residues; it reads SMDHESNRPGKMNPH. Intrachain disulfides connect C234–C308, C238–C312, and C249–C378. The NTR domain occupies 234-378; that stretch reads CIAECHRDKD…KVLAAAHSKC (145 aa).

This sequence belongs to the UPF0450 family.

This is UPF0450 protein C17orf58 homolog from Xenopus laevis (African clawed frog).